A 72-amino-acid chain; its full sequence is Aurein-2.3 (72 aa).

The first 22 residues, 1 to 22 (MAFLKKSLFLVLFLGLVSLSIC), serve as a signal peptide directing secretion. The propeptide occupies 23–49 (EKEKRQNGEDEDENEAANHEEGSEEKR). A disordered region spans residues 27–47 (RQNGEDEDENEAANHEEGSEE). Residues 38-47 (AANHEEGSEE) show a composition bias toward basic and acidic residues. Leu-65 carries the post-translational modification Leucine amide. A propeptide spanning residues 69–72 (NDVE) is cleaved from the precursor.

Post-translationally, amidation is essential for antibacterial activity against Gram-positive bacteria. In terms of tissue distribution, expressed by the skin dorsal glands.

The protein localises to the secreted. It is found in the target cell membrane. Amphipathic alpha-helical antimicrobial peptide with weak to moderate activity against Gram-positive bacteria, and no activity against Gram-negative bacteria. Probably acts by disturbing membrane functions with its amphipathic structure. Strongly inhibits the formation of NO by neuronal nitric oxide synthase (nNOS) at micromolar concentrations. Acts by a non-competitive mechanism, probably by binding to calcium/calmodulin and as a consequence blocking calmodulin attachment to nNOS. The sequence is that of Aurein-2.3 from Ranoidea aurea (Green and golden bell frog).